Reading from the N-terminus, the 262-residue chain is Octopine permease ATP-binding protein P (262 aa).

Positions 9-254 (VQLKDIRKNF…PRTDRFRQFL (246 aa)) constitute an ABC transporter domain. 41-48 (GSSGSGKS) provides a ligand contact to ATP.

This sequence belongs to the ABC transporter superfamily.

Its subcellular location is the cell inner membrane. Its function is as follows. Component of the octopine active transport system probably consisting of four subunits: Q, M, P and T. The sequence is that of Octopine permease ATP-binding protein P (occP) from Rhizobium radiobacter (Agrobacterium tumefaciens).